The sequence spans 435 residues: tRNA modification GTPase MnmE (435 aa).

The (6S)-5-formyl-5,6,7,8-tetrahydrofolate site is built by R24, E82, and K122. Residues 219–360 (GFIIAIAGPP…LIAEMERRLG (142 aa)) form the TrmE-type G domain. A K(+)-binding site is contributed by N229. Residues 229–234 (NAGKST), 248–254 (SPVPGTT), and 273–276 (DTAG) contribute to the GTP site. S233 is a Mg(2+) binding site. The K(+) site is built by S248, V250, and T253. T254 is a Mg(2+) binding site. K435 contributes to the (6S)-5-formyl-5,6,7,8-tetrahydrofolate binding site.

It belongs to the TRAFAC class TrmE-Era-EngA-EngB-Septin-like GTPase superfamily. TrmE GTPase family. Homodimer. Heterotetramer of two MnmE and two MnmG subunits. It depends on K(+) as a cofactor.

It is found in the cytoplasm. Exhibits a very high intrinsic GTPase hydrolysis rate. Involved in the addition of a carboxymethylaminomethyl (cmnm) group at the wobble position (U34) of certain tRNAs, forming tRNA-cmnm(5)s(2)U34. This Azorhizobium caulinodans (strain ATCC 43989 / DSM 5975 / JCM 20966 / LMG 6465 / NBRC 14845 / NCIMB 13405 / ORS 571) protein is tRNA modification GTPase MnmE.